The primary structure comprises 277 residues: Release factor glutamine methyltransferase (277 aa).

S-adenosyl-L-methionine contacts are provided by residues 117–121, Asp-140, Trp-168, and Asn-183; that span reads GTGTG. Residue 183–186 coordinates substrate; the sequence is NPPY.

Belongs to the protein N5-glutamine methyltransferase family. PrmC subfamily.

The catalysed reaction is L-glutaminyl-[peptide chain release factor] + S-adenosyl-L-methionine = N(5)-methyl-L-glutaminyl-[peptide chain release factor] + S-adenosyl-L-homocysteine + H(+). Methylates the class 1 translation termination release factors RF1/PrfA and RF2/PrfB on the glutamine residue of the universally conserved GGQ motif. The chain is Release factor glutamine methyltransferase from Salmonella typhimurium (strain LT2 / SGSC1412 / ATCC 700720).